The following is a 164-amino-acid chain: MSTPEVTPTLSDSNGNEAGVQTQFTIQEISDLLPHRYPFALVDRIIDFQPGKCAVGLKNVTINEPFFPGHIPDRPIMPGVLIVESMAQVGGVILTQLPGMRGKFFAFAGIDGVRFRRPVVPGDQLIMTVELQSFKLQRIAKMQGEARVDGQLVCGGEMLFSLID.

Histidine 70 is an active-site residue.

This sequence belongs to the thioester dehydratase family. FabZ subfamily.

The protein localises to the cytoplasm. It catalyses the reaction a (3R)-hydroxyacyl-[ACP] = a (2E)-enoyl-[ACP] + H2O. Functionally, involved in unsaturated fatty acids biosynthesis. Catalyzes the dehydration of short chain beta-hydroxyacyl-ACPs and long chain saturated and unsaturated beta-hydroxyacyl-ACPs. This is 3-hydroxyacyl-[acyl-carrier-protein] dehydratase FabZ from Synechocystis sp. (strain ATCC 27184 / PCC 6803 / Kazusa).